The chain runs to 396 residues: Phosphoglycerate kinase (396 aa).

Residues 22–24, R37, 60–63, R118, and R151 each bind substrate; these read DLN and HFGR. ATP contacts are provided by residues K201, E323, and 353–356; that span reads GGDT.

The protein belongs to the phosphoglycerate kinase family. Monomer.

The protein localises to the cytoplasm. It carries out the reaction (2R)-3-phosphoglycerate + ATP = (2R)-3-phospho-glyceroyl phosphate + ADP. The protein operates within carbohydrate degradation; glycolysis; pyruvate from D-glyceraldehyde 3-phosphate: step 2/5. This is Phosphoglycerate kinase from Azorhizobium caulinodans (strain ATCC 43989 / DSM 5975 / JCM 20966 / LMG 6465 / NBRC 14845 / NCIMB 13405 / ORS 571).